The sequence spans 368 residues: DNA replication and repair protein RecF (368 aa).

30–37 (GNNAQGKT) lines the ATP pocket.

This sequence belongs to the RecF family.

The protein resides in the cytoplasm. Its function is as follows. The RecF protein is involved in DNA metabolism; it is required for DNA replication and normal SOS inducibility. RecF binds preferentially to single-stranded, linear DNA. It also seems to bind ATP. This is DNA replication and repair protein RecF from Streptococcus pyogenes serotype M4 (strain MGAS10750).